A 204-amino-acid polypeptide reads, in one-letter code: Peptidyl-prolyl cis-trans isomerase CYP20-1 (204 aa).

The N-terminal stretch at 1-23 (MASSVTLLLWSLLLLGTLSAIQA) is a signal peptide. The PPIase cyclophilin-type domain occupies 38–201 (YFDVEIDGKA…SKVVIVDSGE (164 aa)).

Belongs to the cyclophilin-type PPIase family. Interacts with the PP2A A subunit PP2AA1/RCN1. Ubiquitous, mostly in aerial organs. Higher levels in leaf and buds, and lower levels in seedlings.

The protein localises to the endoplasmic reticulum. The protein resides in the secreted. The catalysed reaction is [protein]-peptidylproline (omega=180) = [protein]-peptidylproline (omega=0). With respect to regulation, binds cyclosporin A (CsA). CsA mediates some of its effects via an inhibitory action on PPIase. Its function is as follows. PPIases accelerate the folding of proteins. It catalyzes the cis-trans isomerization of proline imidic peptide bonds in oligopeptides. Seems to be involved in root development. This Arabidopsis thaliana (Mouse-ear cress) protein is Peptidyl-prolyl cis-trans isomerase CYP20-1 (CYP20-1).